Consider the following 331-residue polypeptide: Glycerol-3-phosphate dehydrogenase [NAD(P)+] (331 aa).

NADPH is bound by residues S11, F12, R32, and K106. Residues K106, G134, and S136 each coordinate sn-glycerol 3-phosphate. Position 138 (A138) interacts with NADPH. Residues K189, D242, S252, R253, and N254 each coordinate sn-glycerol 3-phosphate. The active-site Proton acceptor is the K189. R253 lines the NADPH pocket. NADPH contacts are provided by V277 and E279.

The protein belongs to the NAD-dependent glycerol-3-phosphate dehydrogenase family.

Its subcellular location is the cytoplasm. It catalyses the reaction sn-glycerol 3-phosphate + NAD(+) = dihydroxyacetone phosphate + NADH + H(+). The catalysed reaction is sn-glycerol 3-phosphate + NADP(+) = dihydroxyacetone phosphate + NADPH + H(+). It functions in the pathway membrane lipid metabolism; glycerophospholipid metabolism. In terms of biological role, catalyzes the reduction of the glycolytic intermediate dihydroxyacetone phosphate (DHAP) to sn-glycerol 3-phosphate (G3P), the key precursor for phospholipid synthesis. This chain is Glycerol-3-phosphate dehydrogenase [NAD(P)+], found in Clostridium perfringens (strain SM101 / Type A).